We begin with the raw amino-acid sequence, 654 residues long: tRNA 5-methylaminomethyl-2-thiouridine biosynthesis bifunctional protein MnmC (654 aa).

A tRNA (mnm(5)s(2)U34)-methyltransferase region spans residues 1–236; sequence MPTLLQHAQI…KWEVMSGAYV (236 aa). The segment at 262-654 is FAD-dependent cmnm(5)s(2)U34 oxidoreductase; it reads IGAGLAGSSS…FGLRRLIRGK (393 aa).

In the N-terminal section; belongs to the methyltransferase superfamily. tRNA (mnm(5)s(2)U34)-methyltransferase family. The protein in the C-terminal section; belongs to the DAO family. The cofactor is FAD.

The protein resides in the cytoplasm. It carries out the reaction 5-aminomethyl-2-thiouridine(34) in tRNA + S-adenosyl-L-methionine = 5-methylaminomethyl-2-thiouridine(34) in tRNA + S-adenosyl-L-homocysteine + H(+). Its function is as follows. Catalyzes the last two steps in the biosynthesis of 5-methylaminomethyl-2-thiouridine (mnm(5)s(2)U) at the wobble position (U34) in tRNA. Catalyzes the FAD-dependent demodification of cmnm(5)s(2)U34 to nm(5)s(2)U34, followed by the transfer of a methyl group from S-adenosyl-L-methionine to nm(5)s(2)U34, to form mnm(5)s(2)U34. The chain is tRNA 5-methylaminomethyl-2-thiouridine biosynthesis bifunctional protein MnmC from Pseudomonas putida (strain ATCC 47054 / DSM 6125 / CFBP 8728 / NCIMB 11950 / KT2440).